An 807-amino-acid chain; its full sequence is Zinc finger protein 594 (807 aa).

The interval 1 to 23 is disordered; sequence MKEWKSKMEISEEKKSARAASEK. 8 C2H2-type zinc fingers span residues 127–149, 155–177, 183–205, 211–233, 239–261, 267–289, 295–317, and 323–345; these read YECKECEKTFNRSSNLIIHQRIH, YVCNECGKDSNQSSNLIIHQRIH, YICHECGKDFNQSSNLVRHKQIH, YECKECGKAFKGSSNLVLHQRIH, YLCNKCGKAFSQSTDLIIHHRIH, YECYDCGQMFSQSSHLVPHQRIH, LKCNECEKAFRQHSHLTEHQRLH, and YECHRCGKTFSGRTAFLKHQRLH. The C2H2-type 9; degenerate zinc-finger motif lies at 348–370; it reads EKIEECEKTFSKDEELREEQRIH. 6 C2H2-type zinc fingers span residues 376-398, 404-426, 432-454, 460-482, 488-510, and 516-538; these read YWCNQCGRNFQGTSDLIRHQVTH, YECKECGKTFNQSSDLLRHHRIH, CVCSKCGKSFRGSSDLIRHHRVH, YECSECGKAFSQRSHLVTHQKIH, YQCTECGKAFRRRSLLIQHRRIH, and YECKECGKLFIWRTAFLKHQSLH. The C2H2-type 16; degenerate zinc finger occupies 543 to 562; the sequence is LECEKTFSQDEELRGEQKIH. 6 C2H2-type zinc fingers span residues 568–590, 596–618, 624–646, 652–674, 680–702, and 708–730; these read YWCNQCGRAFQGSSDLIRHQVTH, YECKECGKTFNQSSDLLRHHRIH, YVCNKCGKSFRGSSDLIKHHRIH, YECSECGKAFSQRSHLATHQKIH, YQCSECGNAFRRRSLLIQHRRLH, and YECKECGKLFMWHTAFLKHQRLH. The C2H2-type 23; degenerate zinc finger occupies 733–755; that stretch reads EKLEECEKTFSKDEELRKEQRTH. The C2H2-type 24 zinc finger occupies 761-783; sequence YWCNQCSRTFQGSSDLIRHQVTH.

It belongs to the krueppel C2H2-type zinc-finger protein family.

The protein resides in the nucleus. In terms of biological role, may be involved in transcriptional regulation. In Homo sapiens (Human), this protein is Zinc finger protein 594 (ZNF594).